The chain runs to 118 residues: Large ribosomal subunit protein bL20 (118 aa).

This sequence belongs to the bacterial ribosomal protein bL20 family.

Functionally, binds directly to 23S ribosomal RNA and is necessary for the in vitro assembly process of the 50S ribosomal subunit. It is not involved in the protein synthesizing functions of that subunit. This is Large ribosomal subunit protein bL20 from Bacillus cytotoxicus (strain DSM 22905 / CIP 110041 / 391-98 / NVH 391-98).